A 785-amino-acid polypeptide reads, in one-letter code: Ubiquitin carboxyl-terminal hydrolase 10 (785 aa).

2 stretches are compositionally biased toward polar residues: residues 113–122 and 262–277; these read LTLDSGSNAE and DTTE…TLES. Disordered regions lie at residues 113-145 and 262-314; these read LTLD…PPGY and DTTE…ATAT. Residues 290–304 show a composition bias toward basic and acidic residues; that stretch reads HTVESTDSDQAKPEE. Over residues 305 to 314 the composition is skewed to low complexity; that stretch reads ASPTTEATAT. One can recognise a USP domain in the interval 401-782; it reads RGLINKGNWC…TAYLLYYRRV (382 aa). Residue Cys410 is the Nucleophile of the active site. Positions 537-581 are disordered; sequence EKLSVSNGPEVQTVREEEEQDEQGEGSEDEWEQVGPRNKSSVTRQ. A compositionally biased stretch (acidic residues) spans 552 to 568; the sequence is EEEEQDEQGEGSEDEWE. The active-site Proton acceptor is His736.

It belongs to the peptidase C19 family. USP10 subfamily.

The protein localises to the cytoplasm. The protein resides in the nucleus. It catalyses the reaction Thiol-dependent hydrolysis of ester, thioester, amide, peptide and isopeptide bonds formed by the C-terminal Gly of ubiquitin (a 76-residue protein attached to proteins as an intracellular targeting signal).. Its function is as follows. Hydrolase that can remove conjugated ubiquitin from target proteins such as p53/TP53, RPS2/us5, RPS3/us3, RPS10/eS10, BECN1, SNX3 and CFTR. Acts as an essential regulator of p53/TP53 stability: in unstressed cells, specifically deubiquitinates p53/TP53 in the cytoplasm, leading to counteracts MDM2 action and stabilize p53/TP53. Following DNA damage, translocates to the nucleus and deubiquitinates p53/TP53, leading to regulate the p53/TP53-dependent DNA damage response. Component of a regulatory loop that controls autophagy and p53/TP53 levels. Plays a key role in 40S ribosome subunit recycling when a ribosome has stalled during translation: acts both by inhibiting formation of stress granules, which store stalled translation pre-initiation complexes, and mediating deubiquitination of 40S ribosome subunits. Deubiquitinates CFTR in early endosomes, enhancing its endocytic recycling. This Gallus gallus (Chicken) protein is Ubiquitin carboxyl-terminal hydrolase 10 (USP10).